A 480-amino-acid polypeptide reads, in one-letter code: MKIYRVAKASEYLVITGIFIKDIKLKKKAWIFPGQSCTVLDLSPVNYTFEVQAMSAEKLPFVLPAVFTIGPRVDDQESLLKYAKLISPHDRHSNHVNELVQGIIEGETRVLAASMTMEEVFRGTKQFKQEVFDKVQLELNQFGLLIYNANVKQLVDVPGHEYFSYLGQKTQMEAKNQARVDVSEAKMKGEIGSKLREGQTLQNAAKIDAETKVIAMQRAGEGEKEGIKVRTEVKVFENQREAEVAQANSELAKKKAAWTKAAQVAEVEAKKAVALREAELQGEVERMNALTTTEKLKADLLSKASVQYETKVQEANWELYKKQKETEAILYEKKAEAEAQKASADATFYASKQAAEAELYAKKKEAEGIVTLGQAQGAYVSTLLNALGNDYTAVRDYLMINGDMFQEIAKINAEAIRGLEPKISIWTNGGDNSGGITDGAMGMKEVAGVYKMLPPLFKTVHEQTGMLPPAWMGALSEKSS.

The S-palmitoyl cysteine moiety is linked to residue Cys37. Residues 237–257 (ENQREAEVAQANSELAKKKAA) adopt a coiled-coil conformation.

This sequence belongs to the band 7/mec-2 family. Flotillin subfamily. Post-translationally, may be palmitoylated. Expressed in flowers in green pods. Primarily expressed in vascular tissues. Upon induction of nodulation, expansion of expression in the root cortex in the region of elongating root hairs, which will eventually become colonized by bacteria. Expressed in the infection zone in nodules.

The protein resides in the cell membrane. The protein localises to the membrane. Its subcellular location is the caveola. In terms of biological role, may act as a scaffolding protein within caveolar membranes, functionally participating in formation of caveolae or caveolae-like vesicles. Required for early symbiotic events and nodules formation. The sequence is that of Flotillin-like protein 2 (FLOT2) from Medicago truncatula (Barrel medic).